The chain runs to 790 residues: Pentatricopeptide repeat-containing protein At1g25360 (790 aa).

PPR repeat units follow at residues 48 to 82 (RAHI…DKIA), 84 to 109 (TTMV…APVC), 112 to 146 (DTVM…GFKP), 147 to 182 (DNFT…GAGY), 183 to 217 (ITSV…ILEK), 218 to 248 (DERS…MDDN), 250 to 284 (KLVA…GIEL), 285 to 315 (DEFT…VLRR), 319 to 349 (SFHF…MPAK), 350 to 384 (DLVS…NILS), 385 to 415 (WMIM…GFEP), 416 to 450 (CDYA…GFDS), 451 to 481 (SLSA…MPCL), 482 to 516 (DSVS…GIRP), 517 to 551 (DRIT…YRIP), and 553 to 583 (GADH…LPFK). Residues 588–663 (IWEALLSGCR…EVACSWIEME (76 aa)) are type E motif. A type E(+) motif region spans residues 664 to 694 (TQVHTFLVDDTSHPEAEAVYIYLQDLGKEMR). Positions 695–790 (RLGYVPDTSF…NGECSCGNFW (96 aa)) are type DYW motif.

The protein belongs to the PPR family. PCMP-H subfamily.

This is Pentatricopeptide repeat-containing protein At1g25360 (PCMP-H74) from Arabidopsis thaliana (Mouse-ear cress).